The chain runs to 66 residues: Protein translocase subunit SecE (66 aa).

Residues 41–61 (LAVMFIVGFVGFVIYILMEIL) traverse the membrane as a helical segment.

This sequence belongs to the SecE/SEC61-gamma family. Component of the Sec protein translocase complex. Heterotrimer consisting of SecY (alpha), SecG (beta) and SecE (gamma) subunits. The heterotrimers can form oligomers, although 1 heterotrimer is thought to be able to translocate proteins. Interacts with the ribosome. May interact with SecDF, and other proteins may be involved.

It is found in the cell membrane. Its function is as follows. Essential subunit of the Sec protein translocation channel SecYEG. Clamps together the 2 halves of SecY. May contact the channel plug during translocation. The chain is Protein translocase subunit SecE from Archaeoglobus fulgidus (strain ATCC 49558 / DSM 4304 / JCM 9628 / NBRC 100126 / VC-16).